The sequence spans 233 residues: Bcl-2-like protein 1 (233 aa).

Residues 4–24 carry the BH4 motif; sequence SNRELVVDFLSYKLSQKGYSW. The interval 27–73 is disordered; sequence FSDVEENRTEAPEETEAERETPSAINGNPSWHLADSPAVNGATGHSS. Ser49 carries the phosphoserine; by PLK3 modification. Phosphoserine; by CDK1 is present on Ser62. Positions 86-100 match the BH3 motif; that stretch reads VKQALREAGDEFELR. The BH1 signature appears at 129–148; it reads ELFRDGVNWGRIVAFFSFGG. Positions 180–195 match the BH2 motif; sequence PWIQENGGWDTFVDLY. A helical transmembrane segment spans residues 210–226; it reads FNRWFLTGMTVAGVVLL.

The protein belongs to the Bcl-2 family. As to quaternary structure, homodimer. Interacts with BAD. Interacts with PGAM5. Interacts with HEBP2. Interacts with p53/TP53 and BBC3; interaction with BBC3 disrupts the interaction with p53/TP53. Interacts with ATP5F1A and ATP5F1B; the interactions mediate the association of isoform Bcl-X(L) with the mitochondrial membrane ATP synthase F(1)F(0) ATP synthase. Interacts with VDAC1. Interacts with BCL2L11 (via BH3). Interacts with RNF183. Interacts with GIMAP3/IAN4 and GIMAP5/IAN5. Interacts with GIMAP5 and HSPA8/HSC70; the interaction between HSPA8 and BCL2L1 is impaired in the absence of GIMAP5. Interacts with isoform 4 of CLU; this interaction releases and activates BAX and promotes cell death. In terms of assembly, forms heterodimers with BAX, BAK or BCL2; heterodimerization with BAX does not seem to be required for anti-apoptotic activity. Interacts with isoform 1 of SIVA1; the interaction inhibits the anti-apoptotic activity. Interacts with IKZF3. Interacts with RTL10/BOP. Interacts with DNM1L and CLTA; DNM1L and BCL2L1 isoform BCL-X(L) may form a complex in synaptic vesicles that also contains clathrin and MFF. Interacts (via the loop between motifs BH4 and BH3) with NLRP1 (via LRR repeats), but not with NLRP2, NLRP3, NLRP4, PYCARD, nor MEFV. Interacts with BECN1. Proteolytically cleaved by caspases during apoptosis. The cleaved protein, lacking the BH4 motif, has pro-apoptotic activity. In terms of processing, phosphorylated on Ser-62 by CDK1. This phosphorylation is partial in normal mitotic cells, but complete in G2-arrested cells upon DNA-damage, thus promoting subsequent apoptosis probably by triggering caspases-mediated proteolysis. Phosphorylated by PLK3, leading to regulate the G2 checkpoint and progression to cytokinesis during mitosis. Phosphorylation at Ser-49 appears during the S phase and G2, disappears rapidly in early mitosis during prometaphase, metaphase and early anaphase, and re-appears during telophase and cytokinesis. Post-translationally, ubiquitinated by RNF183 during prolonged ER stress, leading to degradation by the proteosome. As to expression, widely expressed, with highest levels in the brain, thymus, bone marrow, and kidney. Bcl-X(L) and Bcl-X(delta-TM) expression is enhanced in B- and T-lymphocytes that have been activated.

The protein localises to the mitochondrion membrane. It is found in the nucleus membrane. Its subcellular location is the cytoplasm. It localises to the cytoskeleton. The protein resides in the microtubule organizing center. The protein localises to the centrosome. It is found in the mitochondrion inner membrane. Its subcellular location is the mitochondrion outer membrane. It localises to the mitochondrion matrix. The protein resides in the cytoplasmic vesicle. The protein localises to the secretory vesicle. It is found in the synaptic vesicle membrane. Its subcellular location is the cytosol. Functionally, potent inhibitor of cell death. Inhibits activation of caspases. Appears to regulate cell death by blocking the voltage-dependent anion channel (VDAC) by binding to it and preventing the release of the caspase activator, CYC1, from the mitochondrial membrane. Also acts as a regulator of G2 checkpoint and progression to cytokinesis during mitosis. Isoform Bcl-X(L) also regulates presynaptic plasticity, including neurotransmitter release and recovery, number of axonal mitochondria as well as size and number of synaptic vesicle clusters. During synaptic stimulation, increases ATP availability from mitochondria through regulation of mitochondrial membrane ATP synthase F(1)F(0) activity and regulates endocytic vesicle retrieval in hippocampal neurons through association with DMN1L and stimulation of its GTPase activity in synaptic vesicles. May attenuate inflammation impairing NLRP1-inflammasome activation, hence CASP1 activation and IL1B release. Its function is as follows. Isoform Bcl-X(S) promotes apoptosis. This Mus musculus (Mouse) protein is Bcl-2-like protein 1 (Bcl2l1).